A 47-amino-acid chain; its full sequence is Short neurotoxin D2A (47 aa).

2 cysteine pairs are disulfide-bonded: cysteine 3–cysteine 24 and cysteine 17–cysteine 39.

In terms of tissue distribution, expressed by the venom gland.

The protein resides in the secreted. In Micrurus pyrrhocryptus (Coral snake), this protein is Short neurotoxin D2A.